The chain runs to 143 residues: Nucleoside diphosphate kinase 2 (143 aa).

Residues lysine 11, phenylalanine 59, arginine 87, threonine 93, arginine 104, and asparagine 114 each coordinate ATP. Residue histidine 117 is the Pros-phosphohistidine intermediate of the active site.

It belongs to the NDK family. Homotetramer. The cofactor is Mg(2+).

The protein localises to the cytoplasm. The catalysed reaction is a 2'-deoxyribonucleoside 5'-diphosphate + ATP = a 2'-deoxyribonucleoside 5'-triphosphate + ADP. It carries out the reaction a ribonucleoside 5'-diphosphate + ATP = a ribonucleoside 5'-triphosphate + ADP. Major role in the synthesis of nucleoside triphosphates other than ATP. The ATP gamma phosphate is transferred to the NDP beta phosphate via a ping-pong mechanism, using a phosphorylated active-site intermediate. In Protochlamydia amoebophila (strain UWE25), this protein is Nucleoside diphosphate kinase 2.